The following is a 125-amino-acid chain: Small ribosomal subunit protein uS13 (125 aa).

A disordered region spans residues Arg-92–Lys-125.

The protein belongs to the universal ribosomal protein uS13 family. Part of the 30S ribosomal subunit. Forms a loose heterodimer with protein S19. Forms two bridges to the 50S subunit in the 70S ribosome.

Functionally, located at the top of the head of the 30S subunit, it contacts several helices of the 16S rRNA. In the 70S ribosome it contacts the 23S rRNA (bridge B1a) and protein L5 of the 50S subunit (bridge B1b), connecting the 2 subunits; these bridges are implicated in subunit movement. Contacts the tRNAs in the A and P-sites. This Akkermansia muciniphila (strain ATCC BAA-835 / DSM 22959 / JCM 33894 / BCRC 81048 / CCUG 64013 / CIP 107961 / Muc) protein is Small ribosomal subunit protein uS13.